We begin with the raw amino-acid sequence, 708 residues long: Leucine-rich repeat neuronal protein 3 (708 aa).

The signal sequence occupies residues Met1–Ala22. The LRRNT domain maps to Val23–Ala69. Over Val23–Thr628 the chain is Extracellular. LRR repeat units follow at residues Asn70–Pro91, Asn93–Lys114, Gln117–Glu138, Asn141–Gly162, Asn165–Ala186, Asn189–Pro210, Asn213–Gly234, Asn237–Lys258, Asn261–Asn282, His285–Ala304, Asp310–Arg332, and Lys335–Pro358. N-linked (GlcNAc...) asparagine glycosylation is found at Asn93 and Asn103. The N-linked (GlcNAc...) asparagine glycan is linked to Asn223. The LRRCT domain occupies Asn368–Pro421. Residue Asn382 is glycosylated (N-linked (GlcNAc...) asparagine). The Ig-like C2-type domain maps to Pro421–Asp514. Cys444 and Cys496 are joined by a disulfide. Residues Asn522, Asn579, Asn608, and Asn625 are each glycosylated (N-linked (GlcNAc...) asparagine). The 95-residue stretch at Gly523–Asp617 folds into the Fibronectin type-III domain. The helical transmembrane segment at Leu629 to Leu649 threads the bilayer. At Ser650–Ser708 the chain is on the cytoplasmic side.

Its subcellular location is the membrane. This Pongo abelii (Sumatran orangutan) protein is Leucine-rich repeat neuronal protein 3 (LRRN3).